The sequence spans 385 residues: L-arabinitol 4-dehydrogenase (385 aa).

Zn(2+) is bound by residues Cys-54, His-79, Glu-80, Cys-109, Cys-112, Cys-115, Cys-123, and Glu-164. NAD(+) contacts are provided by residues 191–192, Asp-212, Arg-217, Ile-292, and 316–318; these read PI and QYR.

It belongs to the zinc-containing alcohol dehydrogenase family. In terms of assembly, homotetramer. Requires Zn(2+) as cofactor.

It catalyses the reaction L-arabinitol + NAD(+) = L-xylulose + NADH + H(+). It functions in the pathway carbohydrate degradation; L-arabinose degradation via L-arabinitol; D-xylulose 5-phosphate from L-arabinose (fungal route): step 2/5. Catalyzes the NAD-dependent oxidation of L-arabinitol to L-xylulose in the fungal L-arabinose catabolic pathway. L-arabinose catabolism is important for using plant material as a carbon source. NADP cannot act as a cosubstrate. This is L-arabinitol 4-dehydrogenase (lad1) from Penicillium rubens (strain ATCC 28089 / DSM 1075 / NRRL 1951 / Wisconsin 54-1255) (Penicillium chrysogenum).